The chain runs to 532 residues: Fatty aldehyde dehydrogenase HFD1 (532 aa).

S111 carries the phosphoserine modification. Residues 134–152 traverse the membrane as a helical segment; it reads IIAPFNFPLLLAFAPLAAA. Position 214–219 (214–219) interacts with NAD(+); the sequence is GSPRVG. Catalysis depends on residues E236 and C273.

It belongs to the aldehyde dehydrogenase family.

The protein localises to the lipid droplet. It is found in the mitochondrion outer membrane. The protein resides in the endosome membrane. It localises to the cytoplasmic granule membrane. The enzyme catalyses an aldehyde + NAD(+) + H2O = a carboxylate + NADH + 2 H(+). It catalyses the reaction hexadecanoate + NADH + 2 H(+) = hexadecanal + NAD(+) + H2O. It carries out the reaction 4-hydroxybenzaldehyde + NAD(+) + H2O = 4-hydroxybenzoate + NADH + 2 H(+). Catalyzes the oxidation of long-chain aliphatic aldehydes to fatty acids. Responsible for conversion of the sphingosine 1-phosphate (S1P) degradation product hexadecenal to hexadecenoic acid. Involved in coenzyme Q (CoQ) biosynthesis, catalyzing the last step in the tyrosine to 4-hydroxybenzoate (4-HB) pathway. Oxidizes 4-hydroxybenzaldehyde (4-Hbz) to 4-HB, the aromatic precursor for coenzyme Q. The sequence is that of Fatty aldehyde dehydrogenase HFD1 (HFD1) from Saccharomyces cerevisiae (strain ATCC 204508 / S288c) (Baker's yeast).